Here is a 326-residue protein sequence, read N- to C-terminus: Undecaprenyl-phosphate 4-deoxy-4-formamido-L-arabinose transferase (326 aa).

Residues 1 to 235 (MFEIHPIKKV…TCLTTTPLRM (235 aa)) lie on the Cytoplasmic side of the membrane. A helical transmembrane segment spans residues 236 to 256 (LSLLGSIIATSGFSLAILLVV). The Periplasmic segment spans residues 257 to 269 (LRLAFGSQWSGEG). A helical membrane pass occupies residues 270-290 (VFMLFAVLFTFIGAQFIGMGL). Over 291-326 (LGEYIGRIYNDVRARPRYFVQKVIRPASSIDIEENH) the chain is Cytoplasmic.

Belongs to the glycosyltransferase 2 family.

It localises to the cell inner membrane. It carries out the reaction UDP-4-deoxy-4-formamido-beta-L-arabinose + di-trans,octa-cis-undecaprenyl phosphate = 4-deoxy-4-formamido-alpha-L-arabinopyranosyl di-trans,octa-cis-undecaprenyl phosphate + UDP. It participates in glycolipid biosynthesis; 4-amino-4-deoxy-alpha-L-arabinose undecaprenyl phosphate biosynthesis; 4-amino-4-deoxy-alpha-L-arabinose undecaprenyl phosphate from UDP-4-deoxy-4-formamido-beta-L-arabinose and undecaprenyl phosphate: step 1/2. Its pathway is bacterial outer membrane biogenesis; lipopolysaccharide biosynthesis. In terms of biological role, catalyzes the transfer of 4-deoxy-4-formamido-L-arabinose from UDP to undecaprenyl phosphate. The modified arabinose is attached to lipid A and is required for resistance to polymyxin and cationic antimicrobial peptides. This Escherichia fergusonii (strain ATCC 35469 / DSM 13698 / CCUG 18766 / IAM 14443 / JCM 21226 / LMG 7866 / NBRC 102419 / NCTC 12128 / CDC 0568-73) protein is Undecaprenyl-phosphate 4-deoxy-4-formamido-L-arabinose transferase.